A 611-amino-acid chain; its full sequence is BTB/POZ domain-containing protein 9 (611 aa).

Residues 36–104 (GDVTFVVEKK…IYTGRATLTD (69 aa)) form the BTB domain. The BACK domain maps to 142–240 (VCMTFDVASL…SLTELLNVVR (99 aa)). The segment at 560 to 611 (QSAQKDSSDEPGTGGASAAGQQLDPHALQAPSGSSLPSSPGSNSRSPNRQHQ) is disordered. The span at 586 to 611 (ALQAPSGSSLPSSPGSNSRSPNRQHQ) shows a compositional bias: low complexity.

This Bos taurus (Bovine) protein is BTB/POZ domain-containing protein 9 (BTBD9).